A 673-amino-acid polypeptide reads, in one-letter code: Auxin response factor 9 (673 aa).

A DNA-binding region (TF-B3) is located at residues 126–228 (FCKTLTASDT…ELRVGVRRLM (103 aa)). Disordered regions lie at residues 356–386 (ELEPLDASNPQPPQPPLRNKRARPPASPSVV) and 514–545 (DSDQISQPSNGNKSDAPGTSSERSPLESQSRQ). A compositionally biased stretch (polar residues) spans 516 to 545 (DQISQPSNGNKSDAPGTSSERSPLESQSRQ). In terms of domain architecture, PB1 spans 547–639 (RSCTKVIMQG…EEAKLLAPKS (93 aa)).

Belongs to the ARF family. Homodimers and heterodimers. In terms of tissue distribution, expressed in roots, culms, leaves and young panicles.

The protein resides in the nucleus. Functionally, auxin response factors (ARFs) are transcriptional factors that bind specifically to the DNA sequence 5'-TGTCTC-3' found in the auxin-responsive promoter elements (AuxREs). This chain is Auxin response factor 9 (ARF9), found in Oryza sativa subsp. japonica (Rice).